Reading from the N-terminus, the 89-residue chain is Dynein light chain 2, cytoplasmic (89 aa).

The protein belongs to the dynein light chain family. In terms of assembly, homodimer. The cytoplasmic dynein 1 complex consists of two catalytic heavy chains (HCs) and a number of non-catalytic subunits which present intermediate chains (ICs), light intermediate chains (LICs) and light chains (LCs); the composition seems to vary in respect to the IC, LIC and LC composition. The heavy chain homodimer serves as a scaffold for the probable homodimeric assembly of the respective non-catalytic subunits. Dynein ICs and LICs bind directly to the HC dimer and the LCs assemble on the IC dimer. Interacts with DYNC1I1. Interacts with BMF. Component of the myosin V motor complex. Interacts with BCAS1. Interacts with Basson/BSN. Interacts with AMBRA1 (via TQT motifs); tethering AMBRA1 to the cytoskeleton. Interacts with IQUB.

Its subcellular location is the cytoplasm. It localises to the cytoskeleton. Its function is as follows. Acts as one of several non-catalytic accessory components of the cytoplasmic dynein 1 complex that are thought to be involved in linking dynein to cargos and to adapter proteins that regulate dynein function. Cytoplasmic dynein 1 acts as a motor for the intracellular retrograde motility of vesicles and organelles along microtubules. May play a role in changing or maintaining the spatial distribution of cytoskeletal structures. This Homo sapiens (Human) protein is Dynein light chain 2, cytoplasmic (DYNLL2).